A 412-amino-acid polypeptide reads, in one-letter code: MSGSAGSGGTTGSARKRIMKEEDMTKVEFETSEEVDVTPTFDTMGLREDLLRGIYAYGFEKPSAIQQRAIKQIIKGRDVIAQSQSGTGKTATFSISVLQCLDIQVRETQALILAPTRELAVQIQKGLLALGDYMNVQCHACIGGTNVGEDIRKLDYGQHVVAGTPGRVFDMIRRRSLRTRAIKMLVLDEADEMLNKGFKEQIYDVYRYLPPATQVVLISATLPHEILEMTNKFMTDPIRILVKRDELTLEGIKQFFVAVEREEWKFDTLCDLYDTLTITQAVIFCNTKRKVDWLTEKMREANFTVSSMHGDMPQKERESIMKEFRSGASRVLISTDVWARGLDVPQVSLIINYDLPNNRELYIHRIGRSGRYGRKGVAINFVKNDDIRILRDIEQYYSTQIDEMPMNVADLI.

Over residues 1-11 (MSGSAGSGGTT) the composition is skewed to gly residues. The tract at residues 1–20 (MSGSAGSGGTTGSARKRIMK) is disordered. The Q motif motif lies at 39 to 67 (PTFDTMGLREDLLRGIYAYGFEKPSAIQQ). ATP is bound by residues K61, Q66, and 86–91 (GTGKTA). The Helicase ATP-binding domain occupies 70–240 (IKQIIKGRDV…NKFMTDPIRI (171 aa)). A DEAD box motif is present at residues 188–191 (DEAD). One can recognise a Helicase C-terminal domain in the interval 251-412 (GIKQFFVAVE…EMPMNVADLI (162 aa)). ATP contacts are provided by residues D343 and 368 to 372 (RSGRY).

Belongs to the DEAD box helicase family. eIF4A subfamily. In terms of assembly, identified in the spliceosome C complex. Part of the mRNA splicing-dependent exon junction complex (EJC) complex; the core complex contains CASC3, EIF4A3, MAGOH and RBM8A. Component of the ALYREF/THOC4-EJC-RNA complex; in the complex interacts with MAGOH, RBM8A and THOC4 (via the WXHD motif); these interactions are likely specific to RNA-bound EJC. May interact with NOM1. Interacts with POLDIP3. Interacts with CWC22 and PRPF19 in an RNA-independent manner. Direct interaction with CWC22 is mediated by the helicase C-terminal domain. Full interaction with CWC22 occurs only when EIF4A3 is not part of the EJC and prevents EIF4A3 binding to RNA. Interacts with NCBP3.

The protein localises to the nucleus. It localises to the nucleus speckle. It is found in the cytoplasm. The enzyme catalyses ATP + H2O = ADP + phosphate + H(+). Its function is as follows. ATP-dependent RNA helicase. Involved in pre-mRNA splicing as component of the spliceosome. Core component of the splicing-dependent multiprotein exon junction complex (EJC) deposited at splice junctions on mRNAs. The EJC is a dynamic structure consisting of core proteins and several peripheral nuclear and cytoplasmic associated factors that join the complex only transiently either during EJC assembly or during subsequent mRNA metabolism. The EJC marks the position of the exon-exon junction in the mature mRNA for the gene expression machinery and the core components remain bound to spliced mRNAs throughout all stages of mRNA metabolism thereby influencing downstream processes including nuclear mRNA export, subcellular mRNA localization, translation efficiency and nonsense-mediated mRNA decay (NMD). Its RNA-dependent ATPase and RNA-helicase activities are induced by CASC3, but abolished in presence of the MAGOH-RBM8A heterodimer, thereby trapping the ATP-bound EJC core onto spliced mRNA in a stable conformation. The inhibition of ATPase activity by the MAGOH-RBM8A heterodimer increases the RNA-binding affinity of the EJC. Involved in translational enhancement of spliced mRNAs after formation of the 80S ribosome complex. Binds spliced mRNA in sequence-independent manner, 20-24 nucleotides upstream of mRNA exon-exon junctions. Shows higher affinity for single-stranded RNA in an ATP-bound core EJC complex than after the ATP is hydrolyzed. Involved in the splicing modulation of BCL2L1/Bcl-X (and probably other apoptotic genes); specifically inhibits formation of proapoptotic isoforms; the function is different from the established EJC assembly. Involved in craniofacial development. The sequence is that of Eukaryotic initiation factor 4A-III (EIF4A3) from Gallus gallus (Chicken).